The primary structure comprises 183 residues: uncharacterized protein (183 aa).

The interval 136-183 (EPPASVPSKQSGRSDKKKSTRKSPTFRNRPDFRKNKGRQLNKTTKQKK) is disordered. Residues 170-183 (NKGRQLNKTTKQKK) are compositionally biased toward basic residues.

This is an uncharacterized protein from Homo sapiens (Human).